The chain runs to 279 residues: BEN domain-containing protein 6 (279 aa).

The segment covering 1–15 has biased composition (polar residues); it reads MQKIVQTDEITNTQA. Disordered stretches follow at residues 1–65 and 134–172; these read MQKI…LAEL and RATNNSSPDSFASTCSNSNSNSSSPVSLKPEEEHQTDEK. The stretch at 62-99 forms a coiled coil; that stretch reads LAELSKEELCAKIKSLKEKLTNTRKENSRLRQSLVMLQ. The span at 134–148 shows a compositional bias: polar residues; it reads RATNNSSPDSFASTC. Residues 162-172 show a composition bias toward basic and acidic residues; that stretch reads KPEEEHQTDEK. The BEN domain maps to 171-271; that stretch reads EKQFQIEKWQ…NCTKKPNLSK (101 aa).

Interacts (via BEN domain) with RBPJ.

The protein localises to the nucleus. In terms of biological role, acts as a corepressor of recombining binding protein suppressor hairless (RBPJ) and inhibits Notch signaling in neural stem cells, thereby opposing their self-renewal and promoting neurogenesis. This Homo sapiens (Human) protein is BEN domain-containing protein 6 (BEND6).